We begin with the raw amino-acid sequence, 88 residues long: UPF0297 protein Ccel_2240 (88 aa).

The protein belongs to the UPF0297 family.

The sequence is that of UPF0297 protein Ccel_2240 from Ruminiclostridium cellulolyticum (strain ATCC 35319 / DSM 5812 / JCM 6584 / H10) (Clostridium cellulolyticum).